A 966-amino-acid chain; its full sequence is Leucine--tRNA ligase (966 aa).

Residues 41–51 carry the 'HIGH' region motif; sequence PYLNGNLHAGH. The 'KMSKS' region signature appears at 632-636; the sequence is KMSKS. Position 635 (Lys635) interacts with ATP.

Belongs to the class-I aminoacyl-tRNA synthetase family.

The protein localises to the cytoplasm. It carries out the reaction tRNA(Leu) + L-leucine + ATP = L-leucyl-tRNA(Leu) + AMP + diphosphate. In Methanosarcina mazei (strain ATCC BAA-159 / DSM 3647 / Goe1 / Go1 / JCM 11833 / OCM 88) (Methanosarcina frisia), this protein is Leucine--tRNA ligase.